The chain runs to 262 residues: Type III pantothenate kinase (262 aa).

Residue aspartate 12 to alanine 19 participates in ATP binding. Substrate-binding positions include tyrosine 94 and glycine 109–valine 112. Aspartate 111 (proton acceptor) is an active-site residue. Aspartate 132 lines the K(+) pocket. Threonine 135 contacts ATP. Threonine 187 contacts substrate.

Belongs to the type III pantothenate kinase family. As to quaternary structure, homodimer. Requires NH4(+) as cofactor. The cofactor is K(+).

The protein resides in the cytoplasm. It catalyses the reaction (R)-pantothenate + ATP = (R)-4'-phosphopantothenate + ADP + H(+). It functions in the pathway cofactor biosynthesis; coenzyme A biosynthesis; CoA from (R)-pantothenate: step 1/5. Functionally, catalyzes the phosphorylation of pantothenate (Pan), the first step in CoA biosynthesis. This Borreliella burgdorferi (strain ATCC 35210 / DSM 4680 / CIP 102532 / B31) (Borrelia burgdorferi) protein is Type III pantothenate kinase.